A 179-amino-acid polypeptide reads, in one-letter code: SCAN domain-containing protein 1 (179 aa).

A disordered region spans residues 1 to 108 (MAATEPILAA…GSRLGPETFR (108 aa)). Positions 60–80 (AIPTPQAAASAAPELPLGPAP) are enriched in low complexity. The region spanning 108-166 (RQRFRQFRYQDAAGPREAFRQLRELSRQWLRPDIRTKEQIVEMLVQEQLLAILPEAARA) is the SCAN box domain.

Interacts with ZNF202.

The protein resides in the nucleus. May regulate transcriptional activity. The protein is SCAN domain-containing protein 1 (SCAND1) of Pongo pygmaeus (Bornean orangutan).